We begin with the raw amino-acid sequence, 842 residues long: Protein translocase subunit SecA (842 aa).

Residues glutamine 91, 109–113 (GEGKT), and aspartate 498 contribute to the ATP site. The segment covering 798–824 (QGQHVSAEDGKEKVKPQPVVKDNHIGR) has biased composition (basic and acidic residues). The tract at residues 798-827 (QGQHVSAEDGKEKVKPQPVVKDNHIGRNDP) is disordered. Residues cysteine 828, cysteine 830, cysteine 839, and cysteine 840 each contribute to the Zn(2+) site.

The protein belongs to the SecA family. In terms of assembly, monomer and homodimer. Part of the essential Sec protein translocation apparatus which comprises SecA, SecYEG and auxiliary proteins SecDF. Other proteins may also be involved. It depends on Zn(2+) as a cofactor.

The protein localises to the cell membrane. It is found in the cytoplasm. It catalyses the reaction ATP + H2O + cellular proteinSide 1 = ADP + phosphate + cellular proteinSide 2.. In terms of biological role, part of the Sec protein translocase complex. Interacts with the SecYEG preprotein conducting channel. Has a central role in coupling the hydrolysis of ATP to the transfer of proteins into and across the cell membrane, serving as an ATP-driven molecular motor driving the stepwise translocation of polypeptide chains across the membrane. This Staphylococcus carnosus (strain TM300) protein is Protein translocase subunit SecA.